Reading from the N-terminus, the 362-residue chain is Probable endopolygalacturonase B (362 aa).

The first 20 residues, 1–20 (MHFLQNAFVAATMGAAPAAA), serve as a signal peptide directing secretion. Residues 21 to 25 (TPLEK) constitute a propeptide that is removed on maturation. Cysteines 28 and 43 form a disulfide. PbH1 repeat units lie at residues 155-184 (ADHL…DIGQ), 185-206 (STYI…AINS), 207-227 (GEHI…SIGS), 236-257 (VNDV…RIKT), 265-287 (VENV…VVEQ), and 299-344 (TNGV…DVTG). The active-site Proton donor is the D199. A disulfide bridge links C201 with C217. Residue H221 is part of the active site. A disulfide bond links C327 and C332. A glycan (N-linked (GlcNAc...) asparagine) is linked at N334. A disulfide bridge links C351 with C360.

Belongs to the glycosyl hydrolase 28 family.

The protein resides in the secreted. It carries out the reaction (1,4-alpha-D-galacturonosyl)n+m + H2O = (1,4-alpha-D-galacturonosyl)n + (1,4-alpha-D-galacturonosyl)m.. Involved in maceration and soft-rotting of plant tissue. Hydrolyzes the 1,4-alpha glycosidic bonds of de-esterified pectate in the smooth region of the plant cell wall. The protein is Probable endopolygalacturonase B (pgaB) of Aspergillus kawachii (White koji mold).